The following is a 201-amino-acid chain: Pyrrolidone-carboxylate peptidase (201 aa).

Catalysis depends on residues Glu78, Cys141, and His165.

It belongs to the peptidase C15 family. In terms of assembly, homotetramer.

It is found in the cytoplasm. It carries out the reaction Release of an N-terminal pyroglutamyl group from a polypeptide, the second amino acid generally not being Pro.. Removes 5-oxoproline from various penultimate amino acid residues except L-proline. This is Pyrrolidone-carboxylate peptidase from Brachyspira hyodysenteriae (strain ATCC 49526 / WA1).